We begin with the raw amino-acid sequence, 370 residues long: MAWTLVLLVLLGTSSCLDAKELHKKIDISALLESGSGSGEEGSSGSGSAPEPVRDQDVDWKQFKIKPEQCLDKGENCTGDPEQCQENWQEMVVQCPFSCRFCSQRSIDDVTECTDARGAACKDWADNRNDCLRFPQFMSTECTKSCKLCGKETNGKKFDKDVRCIEWAKNGYCNEGELYKEKCPHNCEVHKSIKKEPKGPYPYPTESLYPYQYWQLYPAPGPAPYPPYPYPTAAPYPYQYSPYPYTPYPPPPYPNPYPQPPYPPPPPPYPNPYPQPPYPPPPAPCSGPGPCPYPGPPPPPYPAPTPYPPPPPPYPEQVPPPPPPPPPPPPPPPYPYPYPYPDESENTKHKSKKHAKHHEKHHKENHSKKS.

A signal peptide spans 1–19; sequence MAWTLVLLVLLGTSSCLDA. Positions 34–55 are disordered; the sequence is SGSGSGEEGSSGSGSAPEPVRD. Positions 36–45 are enriched in gly residues; the sequence is SGSGEEGSSG. 3 ShKT domains span residues 70–102, 113–149, and 155–190; these read CLDK…CRFC, CTDA…CKLC, and GKKF…CEVH. 8 cysteine pairs are disulfide-bonded: Cys70–Cys102, Cys77–Cys95, Cys84–Cys99, Cys113–Cys149, Cys121–Cys142, Cys131–Cys146, Cys164–Cys183, and Cys173–Cys187. The span at 306–340 shows a compositional bias: pro residues; sequence PYPPPPPPYPEQVPPPPPPPPPPPPPPPYPYPYPY. The disordered stretch occupies residues 306–370; sequence PYPPPPPPYP…HHKENHSKKS (65 aa). A compositionally biased stretch (basic residues) spans 349 to 370; sequence HKSKKHAKHHEKHHKENHSKKS.

It belongs to the NEP3 family. Nematocytes. In late planulae, transcripts are found throughout the ectoderm in nematocytes, with high concentration of expressing cells in the oral pole. In primary polyps, is expressed in nematocytes in the body wall and physa ectoderm and in the upper and lower pharynx.

The protein localises to the nematocyst. It is found in the secreted. The chain is Nematocyst expressed protein 4 from Nematostella vectensis (Starlet sea anemone).